A 212-amino-acid chain; its full sequence is Large ribosomal subunit protein uL3 (212 aa).

A disordered region spans residues 134 to 154 (RKTHGNSVSHRVPGSIGQNQT). The residue at position 153 (Gln-153) is an N5-methylglutamine.

It belongs to the universal ribosomal protein uL3 family. As to quaternary structure, part of the 50S ribosomal subunit. Forms a cluster with proteins L14 and L19. In terms of processing, methylated by PrmB.

One of the primary rRNA binding proteins, it binds directly near the 3'-end of the 23S rRNA, where it nucleates assembly of the 50S subunit. The chain is Large ribosomal subunit protein uL3 from Dichelobacter nodosus (strain VCS1703A).